A 234-amino-acid chain; its full sequence is Synaptogyrin-4 (234 aa).

In terms of domain architecture, MARVEL spans 18–169; sequence FLRRPKTITR…QAYLAFQDLR (152 aa). Transmembrane regions (helical) follow at residues 25-45, 66-86, 104-124, and 145-165; these read ITRV…LTDG, CSFA…FLVL, LLDF…FCFL, and AAIA…YLAF.

This sequence belongs to the synaptogyrin family.

It is found in the membrane. The sequence is that of Synaptogyrin-4 (SYNGR4) from Homo sapiens (Human).